A 456-amino-acid chain; its full sequence is uncharacterized protein (456 aa).

Positions 2-60 constitute a TRAM domain; sequence AMRKGKEYELNIEEIEFPSMGIAYHEGLKVYVKHGIPGQKVLARITTKKKDHAKGKIIE. Residues cysteine 73, cysteine 79, cysteine 82, and cysteine 162 each coordinate [4Fe-4S] cluster. Residues glutamine 288, tyrosine 317, glutamate 338, and aspartate 383 each coordinate S-adenosyl-L-methionine. Cysteine 410 functions as the Nucleophile in the catalytic mechanism.

The protein belongs to the class I-like SAM-binding methyltransferase superfamily. RNA M5U methyltransferase family.

This is an uncharacterized protein from Clostridium tetani (strain Massachusetts / E88).